The following is a 273-amino-acid chain: Nucleotide-binding protein TT_C1664 (273 aa).

8 to 15 (GLSGAGKT) serves as a coordination point for ATP. A GTP-binding site is contributed by 57–60 (DARA).

The protein belongs to the RapZ-like family.

Displays ATPase and GTPase activities. The protein is Nucleotide-binding protein TT_C1664 of Thermus thermophilus (strain ATCC BAA-163 / DSM 7039 / HB27).